We begin with the raw amino-acid sequence, 202 residues long: UPF0056 membrane protein PH0214 (202 aa).

The next 6 membrane-spanning stretches (helical) occupy residues Ile5 to Val25, Ile47 to Phe67, Val76 to Val96, Ile104 to Thr124, Ile135 to Ile155, and Ile174 to Ile194.

The protein belongs to the UPF0056 (MarC) family.

It localises to the cell membrane. This chain is UPF0056 membrane protein PH0214, found in Pyrococcus horikoshii (strain ATCC 700860 / DSM 12428 / JCM 9974 / NBRC 100139 / OT-3).